A 132-amino-acid polypeptide reads, in one-letter code: MKTNKLYECTAIIDGGLQDEAVAATLAMVQRVITEKGGTINSVLDLGRRKTAYPIKKKSMGYYVHIEFNAAAPVIAEIERVLRYEEELLRYLIIQLTTPLLEMRKRVEKYSVVLGSVEEGASTSGDAEGSNE.

The protein belongs to the bacterial ribosomal protein bS6 family.

In terms of biological role, binds together with bS18 to 16S ribosomal RNA. This chain is Small ribosomal subunit protein bS6, found in Chlorobium chlorochromatii (strain CaD3).